Reading from the N-terminus, the 872-residue chain is Serine/threonine-protein phosphatase 1 regulatory subunit 10 (872 aa).

Residues 1 to 348 form an interaction with TOX4 region; it reads MGSGPIDPKE…EPAAPAEPMD (348 aa). Positions 73–147 constitute a TFIIS N-terminal domain; it reads KLLNSWLTYS…SDWMAVIRSQ (75 aa). 4 disordered regions span residues 147–213, 247–270, 307–398, and 534–837; these read QSST…STGL, SATAAPGDAAPPAEKKYKPLNTTP, KKKK…KRKT, and VETL…HGGD. Basic and acidic residues-rich tracts occupy residues 153-166 and 174-196; these read AEKDKKKRKEEGKS and PLTEVKAETRAEEAPEKKKEKPK. Lysine 179 is covalently cross-linked (Glycyl lysine isopeptide (Lys-Gly) (interchain with G-Cter in SUMO2)). A compositionally biased stretch (low complexity) spans 248-258; sequence ATAAPGDAAPP. Residue lysine 262 forms a Glycyl lysine isopeptide (Lys-Gly) (interchain with G-Cter in SUMO2) linkage. Serine 313 is modified (phosphoserine). Low complexity predominate over residues 325-336; that stretch reads KTSTEPSTAKPS. The segment at 357 to 433 is necessary for interaction with PPP1CA; that stretch reads PAVEVPELMD…NKIKDFGEAA (77 aa). At serine 382 the chain carries Phosphoserine. The necessary for interaction with PPP1CC stretch occupies residues 393–408; it reads GRKRKTVTWPEEGKLR. The PP1-binding motif motif lies at 394-423; that stretch reads RKRKTVTWPEEGKLREYFYFELDETERVNV. Threonine 398 carries the phosphothreonine; by PKA modification. The segment at 418-619 is interaction with WDR82; sequence TERVNVNKIK…LKQMLVPHGL (202 aa). The span at 540 to 551 shows a compositional bias: gly residues; the sequence is GGSGGSPDGAGG. Residues serine 545 and serine 591 each carry the phosphoserine modification. Positions 583 to 595 are enriched in polar residues; it reads EILTSIMGSPNNH. Positions 596–611 are enriched in basic and acidic residues; that stretch reads PSEELLKQPDYSDKLK. The span at 644–655 shows a compositional bias: pro residues; it reads PPGPGGPMPGPH. Arginine 665 carries the omega-N-methylarginine modification. Residues 674–690 show a composition bias toward low complexity; it reads RGGDPFWDGPGDPMRGG. 2 positions are modified to omega-N-methylarginine: arginine 693 and arginine 737. Over residues 724-762 the composition is skewed to gly residues; that stretch reads ARGGRSGGGPPNGRGGPGGGGMVGGGGHRPHEGPGGSMG. Residues 795-835 show a composition bias toward basic and acidic residues; the sequence is PHDVPSHRGHDHRGPPPHEHRGHDGHGGGGHRGHDGGHSHG. The C3H1-type zinc-finger motif lies at 838–866; that stretch reads MSNRPVCRHFMMKGNCRYENNCAFYHPGV.

As to quaternary structure, component of the PNUTS-PP1 complex (also named PTW/PP1 complex), composed of PPP1R10/PNUTS, TOX4, WDR82, and PPP1CA (or PPP1CB or PPP1CC). In terms of processing, phosphorylated on Thr-398 by PKA within the region necessary for interaction with PPP1CA. As to expression, expressed in testis, brain and intestine (at protein level). Highly expressed in testis.

The protein resides in the nucleus. It localises to the chromosome. In terms of biological role, substrate-recognition component of the PNUTS-PP1 protein phosphatase complex, a protein phosphatase 1 (PP1) complex that promotes RNA polymerase II transcription pause-release, allowing transcription elongation. Promoter-proximal pausing by RNA polymerase II is a transcription halt following transcription initiation but prior to elongation, which acts as a checkpoint to control that transcripts are favorably configured for transcriptional elongation. The PNUTS-PP1 complex mediates the release of RNA polymerase II from promoter-proximal region of genes by catalyzing dephosphorylation of proteins involved in transcription, such as AFF4, CDK9, MEPCE, INTS12, NCBP1, POLR2M/GDOWN1 and SUPT6H. The PNUTS-PP1 complex also regulates RNA polymerase II transcription termination by mediating dephosphorylation of SUPT5H in termination zones downstream of poly(A) sites, thereby promoting deceleration of RNA polymerase II transcription. PNUTS-PP1 complex is also involved in the response to replication stress by mediating dephosphorylation of POLR2A at 'Ser-5' of the CTD, promoting RNA polymerase II degradation. The PNUTS-PP1 complex also plays a role in the control of chromatin structure and cell cycle progression during the transition from mitosis into interphase. PNUTS-PP1 complex mediates dephosphorylation of MYC, promoting MYC stability by preventing MYC ubiquitination by the SCF(FBXW7) complex. In addition to acts as a substrate-recognition component, PPP1R10/PNUTS also acts as a nuclear targeting subunit for the PNUTS-PP1 complex. In some context, PPP1R10/PNUTS also acts as an inhibitor of protein phosphatase 1 (PP1) activity by preventing access to substrates. The protein is Serine/threonine-protein phosphatase 1 regulatory subunit 10 of Rattus norvegicus (Rat).